A 346-amino-acid polypeptide reads, in one-letter code: Ly6/PLAUR domain-containing protein 3 (346 aa).

Positions methionine 1–alanine 30 are cleaved as a signal peptide. 2 UPAR/Ly6 domains span residues cysteine 33–proline 126 and cysteine 140–asparagine 222. Residues asparagine 118, asparagine 163, asparagine 176, and asparagine 183 are each glycosylated (N-linked (GlcNAc...) asparagine). The interval proline 233–lysine 324 is disordered. Over residues arginine 234–proline 246 the composition is skewed to pro residues. The span at threonine 247–threonine 269 shows a compositional bias: low complexity. Over residues glycine 283–arginine 295 the composition is skewed to basic and acidic residues. Residue cysteine 326 is the site of GPI-anchor amidated cysteine attachment. Residues valine 327 to leucine 346 constitute a propeptide, removed in mature form.

In terms of assembly, binds laminin-1 and laminin-5. Interacts with LGALS3. Interacts with AGR2 and AGR3. N-glycosylated and O-glycosylated. As to expression, expressed in placenta, skin and urothelium. Found in suprabasal keratinocytes of chronic wounds. Weak expression is found in esophagus and peripheral blood mononuclear cells. Found in the majority of primary and metastatic transitional cell carcinomas (TCCs) and as well in breast cancer tissues, but not in adjacent normal tissues. High expression is found in the tumor component of some noninvasive superficial lesions and in invasive and metastatic urothelial cancers.

The protein resides in the cell membrane. In terms of biological role, supports cell migration. May be involved in urothelial cell-matrix interactions. May be involved in tumor progression. The polypeptide is Ly6/PLAUR domain-containing protein 3 (LYPD3) (Homo sapiens (Human)).